Reading from the N-terminus, the 915-residue chain is MASESDTEEFYDAPEDVHLGTGYPVGSPGKVGLLSFKEAENTANQAGNESPVQELRQDVSKKIIESIIEESQKVLQLEDDSLDSKGKGLSDEATAGPSVAGTEFSNIPGLLAIEHELQQDSEKAESQNVAEESELETQKCFPSDETCEKSEKTVDETDNLTEVSSGEQLDASGLEAETLNKEALEVKEGDVLDPASLDTLSTTDFAAVEEVAPAKPPRHLTPEPDIVASTKKPVPARPPPPTNFPPPRPPPPSRPAPPPRKKKSELEFEALKTPDLDVPKENITSDSLLTTNMASENTVRDSLPSLDLASATSGDKIVTAQENGKAPDVQTVAGEVMGPQRPRSNSGRELTDEEILASVMIKNLDTGEEIPLSLAEEKLPTGINPLTLHIMRRTKEYVSNDATQSDDEEKLQSQQTDTDGGRLKQKTTQLKKFLGKSVKRAKHLAEEYGERAINKVKSVRDEVFHTDQDDPSSSDDEGMPYTRPVKFKAAHGFKGPYDFDQIKVVQDLSGEHMGAVWTMKFSHCGRLLASAGQDNIVRIWALKNAFDYFNNMRMKYNTEGRVSPSPSQESLSSSKSDTDMGVCSGTDEDPDDKNAPFRQRPFCKYKGHTADLLDLSWSKNYFLLSSSMDKTVRLWHISRRECLCCFQHIDFVTAIAFHPRDDRYFLSGSLDGKLRLWNIPDKKVALWNEVDGQTKLITAANFCQNGKYAVIGTYDGRCIFYDTEHLKYHTQIHVRSTRGRNKVGRKITGIEPLPGENKILVTSNDSRIRLYDLRDLSLSMKYKGYVNSSSQIKASFSHDFTYLVSGSEDKYVYIWSTYHDLSKFTSVRRDRNDFWEGIKAHNAVVTSAIFAPNPSLMLSLDVQSEKLEGIDKYEDAEVLDSTSTGIVKTDNTEVLLSADFTGAIKVFINKRKTVS.

Residues 1–14 show a composition bias toward acidic residues; it reads MASESDTEEFYDAP. The interval 1–24 is disordered; it reads MASESDTEEFYDAPEDVHLGTGYP. N-acetylalanine is present on alanine 2. Residues 2-173 are binding activity; sequence ASESDTEEFY…SSGEQLDASG (172 aa). The residue at position 3 (serine 3) is a Phosphoserine. The FFAT-like motif motif lies at 9–15; it reads EFYDAPE. Tyrosine 11 is modified (phosphotyrosine). Serine 27, serine 50, serine 66, serine 71, serine 81, and serine 126 each carry phosphoserine. 3 disordered regions span residues 79–102, 117–174, and 208–282; these read DDSL…VAGT, LQQD…ASGL, and VEEV…PKEN. Positions 114–139 form a coiled coil; sequence EHELQQDSEKAESQNVAEESELETQK. Positions 146–155 are enriched in basic and acidic residues; that stretch reads TCEKSEKTVD. Residues threonine 161 and threonine 221 each carry the phosphothreonine modification. The tract at residues 213-259 is important for interaction with ARHGAP26 AND ARHGAP10; the sequence is PAKPPRHLTPEPDIVASTKKPVPARPPPPTNFPPPRPPPPSRPAPPP. Pro residues predominate over residues 235–258; that stretch reads PARPPPPTNFPPPRPPPPSRPAPP. Phosphoserine is present on serine 264. Basic and acidic residues predominate over residues 264 to 280; sequence SELEFEALKTPDLDVPK. Threonine 273 carries the post-translational modification Phosphothreonine. The important for interaction with RAB11A stretch occupies residues 336-349; the sequence is VMGPQRPRSNSGRE. Residues serine 344 and serine 346 each carry the phosphoserine modification. A phosphothreonine mark is found at threonine 351 and threonine 403. 2 disordered regions span residues 399 to 425 and 461 to 481; these read SNDA…RLKQ and DEVF…GMPY. Serine 405, serine 472, serine 473, and serine 474 each carry phosphoserine. A compositionally biased stretch (acidic residues) spans 469–478; that stretch reads DDPSSSDDEG. A Phosphotyrosine modification is found at tyrosine 481. Residues 511–550 form a WD 1 repeat; sequence EHMGAVWTMKFSHCGRLLASAGQDNIVRIWALKNAFDYFN. The segment at 559–593 is disordered; that stretch reads EGRVSPSPSQESLSSSKSDTDMGVCSGTDEDPDDK. 2 positions are modified to phosphoserine: serine 563 and serine 567. Over residues 563–575 the composition is skewed to low complexity; it reads SPSPSQESLSSSK. 7 WD repeats span residues 607 to 645, 647 to 687, 692 to 731, 742 to 781, 786 to 825, 840 to 880, and 882 to 915; these read GHTA…CLCC, QHID…VALW, GQTK…YHTQ, KVGR…LSMK, VNSS…SKFT, AHNA…EVLD, and TSTG…KTVS.

Interacts with the GTP-bound form of RAB11 when membrane-associated. Interacts with GRAF1/ARHGAP26 or GRAF2/ARHGAP10; the interaction connects the endoplasmic reticulum (ER) with the endosomal tubule. Interacts (via FFAT-like motif) with VAPA (via MSP domain) or VAPB (via MSP domain); the interaction connects the ER with the endosomal tubule. Does not bind to other Rab and Rho small G proteins. In terms of processing, phosphorylated by ATK1; the phosphorylation stabilizes its interaction with RAB11A and RAB11B.

Its subcellular location is the cytoplasm. It localises to the cytosol. The protein localises to the perinuclear region. It is found in the endosome membrane. The protein resides in the golgi apparatus. Its subcellular location is the trans-Golgi network. Functionally, downstream effector for Rab11 which regulates Rab11 intracellular membrane trafficking functions such as endocytic recycling, intracellular ciliogenesis and protein export. ATK1-mediated phosphorylation of WDR44 induces binding to Rab11 which activates endocytic recycling of transferrin receptor back to the plasma membrane. When bound to Rab11, prevents the formation of the ciliogenic Rab11-Rabin8/RAB3IP-RAB11FIP3 complex, therefore inhibiting preciliary trafficking and ciliogenesis. Participates in neo-synthesized protein export by connecting the endoplasmic reticulum (ER) with the endosomal tubule via direct interactions with the integral ER proteins VAPA or VAPB and the endosomal protein GRAFs (GRAF1/ARHGAP26 or GRAF2/ARHGAP10), which facilitates the transfer of proteins such as E-cadherin, MPP14 and CFTR into a Rab8-Rab10-Rab11-dependent export route. In Mus musculus (Mouse), this protein is WD repeat-containing protein 44.